Here is a 580-residue protein sequence, read N- to C-terminus: FAD-dependent monooxygenase yanF (580 aa).

The disordered stretch occupies residues 1–21 (MSSSAECRPIGWGGWGPDPNT). An FAD-binding PCMH-type domain is found at 150 to 322 (CRLNASCIVT…VEYDLTTNTG (173 aa)). Residue His-187 is modified to Pros-8alpha-FAD histidine.

This sequence belongs to the oxygen-dependent FAD-linked oxidoreductase family.

The protein operates within secondary metabolite biosynthesis; terpenoid biosynthesis. Functionally, FAD-dependent monooxygenase; part of the gene cluster that mediates the biosynthesis of yanuthone D, a fungal isoprenoid epoxycyclohexenone that acts as an antibiotic against fungi and bacteria. The first step of the pathway is the synthesis of 6-methylsalicylic acid (6-MSA) by the polyketide synthase yanA. 6-MSA is then converted to m-cresol by the decarboxylase yanB. The cytochrome P450 monooxygenase yanC then catalyzes the oxidation of m-cresol to toluquinol. Epoxidation of toluquinol is then performed by the short chain dehydrogenase yanD, with the help of yanE, and a further prenylated by yanG leads to 7-deacetoxyyanuthone A. The next step is the hydroxylation of C-22 of 7-deacetoxyyanuthone A by the cytochrome P450 monooxygenase yanH to yield 22-deacetylyanuthone A. O-Mevalon transferase yanI then attaches mevalon to the hydroxyl group of 22-deacetylyanuthone A to produce yanuthone E. Finally, the FAD-dependent monooxygenase yanF oxidizes the hydroxyl group at C15 of yanuthone E to form yanuthone D. Furthermore, several branching points in the pathway lead to the production of yanuthones F and G from 7-deacetoxyyanuthone A; yanuthones H and I from 22-deacetylyanuthone A; and yanuthone J from yanuthone E. This is FAD-dependent monooxygenase yanF from Aspergillus niger (strain ATCC 1015 / CBS 113.46 / FGSC A1144 / LSHB Ac4 / NCTC 3858a / NRRL 328 / USDA 3528.7).